A 116-amino-acid chain; its full sequence is Photosystem II assembly factor Psb28 protein (116 aa).

This sequence belongs to the Psb28 family. Part of a photosystem II (PSII) assembly intermediate complex PSII-I; crystallized from a strain deleted of psbJ, it forms monomeric PSII before addition of the oxygen evolving complex. PSII-I includes 3 assembly factors not found in mature PSII (Psb27, Psb28 and Psb34). This protein binds to the cytoplasmic face of D1 and D2 (psbA and psbD), contacting CP47 (psbB) directly above the quinone b-binding site.

The protein resides in the cellular thylakoid membrane. A photosystem II (PSII) assembly factor that binds PSII during biogenesis, protecting the complex until water splitting is activated. In Thermosynechococcus vestitus (strain NIES-2133 / IAM M-273 / BP-1), this protein is Photosystem II assembly factor Psb28 protein.